The chain runs to 282 residues: Bifunctional protein FolD (282 aa).

NADP(+) contacts are provided by residues 162-164 (GRS), S187, and V228.

Belongs to the tetrahydrofolate dehydrogenase/cyclohydrolase family. As to quaternary structure, homodimer.

It catalyses the reaction (6R)-5,10-methylene-5,6,7,8-tetrahydrofolate + NADP(+) = (6R)-5,10-methenyltetrahydrofolate + NADPH. The catalysed reaction is (6R)-5,10-methenyltetrahydrofolate + H2O = (6R)-10-formyltetrahydrofolate + H(+). Its pathway is one-carbon metabolism; tetrahydrofolate interconversion. Functionally, catalyzes the oxidation of 5,10-methylenetetrahydrofolate to 5,10-methenyltetrahydrofolate and then the hydrolysis of 5,10-methenyltetrahydrofolate to 10-formyltetrahydrofolate. In Thermus thermophilus (strain ATCC BAA-163 / DSM 7039 / HB27), this protein is Bifunctional protein FolD.